The primary structure comprises 226 residues: 2-C-methyl-D-erythritol 4-phosphate cytidylyltransferase (226 aa).

It belongs to the IspD/TarI cytidylyltransferase family. IspD subfamily.

It catalyses the reaction 2-C-methyl-D-erythritol 4-phosphate + CTP + H(+) = 4-CDP-2-C-methyl-D-erythritol + diphosphate. It participates in isoprenoid biosynthesis; isopentenyl diphosphate biosynthesis via DXP pathway; isopentenyl diphosphate from 1-deoxy-D-xylulose 5-phosphate: step 2/6. In terms of biological role, catalyzes the formation of 4-diphosphocytidyl-2-C-methyl-D-erythritol from CTP and 2-C-methyl-D-erythritol 4-phosphate (MEP). The polypeptide is 2-C-methyl-D-erythritol 4-phosphate cytidylyltransferase (Prochlorococcus marinus (strain MIT 9312)).